Here is a 249-residue protein sequence, read N- to C-terminus: Ubiquinone biosynthesis O-methyltransferase (249 aa).

Residues arginine 41, glycine 72, aspartate 93, and methionine 136 each coordinate S-adenosyl-L-methionine.

It belongs to the methyltransferase superfamily. UbiG/COQ3 family.

It carries out the reaction a 3-demethylubiquinol + S-adenosyl-L-methionine = a ubiquinol + S-adenosyl-L-homocysteine + H(+). The enzyme catalyses a 3-(all-trans-polyprenyl)benzene-1,2-diol + S-adenosyl-L-methionine = a 2-methoxy-6-(all-trans-polyprenyl)phenol + S-adenosyl-L-homocysteine + H(+). It participates in cofactor biosynthesis; ubiquinone biosynthesis. Functionally, O-methyltransferase that catalyzes the 2 O-methylation steps in the ubiquinone biosynthetic pathway. In Mesorhizobium japonicum (strain LMG 29417 / CECT 9101 / MAFF 303099) (Mesorhizobium loti (strain MAFF 303099)), this protein is Ubiquinone biosynthesis O-methyltransferase.